Here is a 685-residue protein sequence, read N- to C-terminus: Serine/threonine-protein kinase PLK2 (685 aa).

The segment at 24-71 (KGCGADSKKKRPPQPPEESQPPQSQAQVPPAAAHHHHHHSHSGPEISR) is disordered. The span at 43–55 (QPPQSQAQVPPAA) shows a compositional bias: low complexity. The Protein kinase domain maps to 82 to 334 (YCRGKVLGKG…LDDIIRHDFF (253 aa)). Residues 88–96 (LGKGGFAKC) and K111 each bind ATP. The active-site Proton acceptor is the D205. A Phosphothreonine modification is found at T239. The interval 406–433 (SITQQPSKHRTDEELQPPTTTVARSGTP) is disordered. POLO box domains are found at residues 503–581 (WVTK…YMEE) and 601–685 (YLLQ…QRCN).

It belongs to the protein kinase superfamily. Ser/Thr protein kinase family. CDC5/Polo subfamily. In terms of assembly, interacts with NSF; causing NSF dissociation from GRIA2. Interacts with CIB1. Post-translationally, catalytic activity is enhanced by phosphorylation of Thr-239.

Its subcellular location is the cytoplasm. The protein localises to the cytoskeleton. It is found in the microtubule organizing center. The protein resides in the centrosome. It localises to the centriole. Its subcellular location is the cell projection. The protein localises to the dendrite. The enzyme catalyses L-seryl-[protein] + ATP = O-phospho-L-seryl-[protein] + ADP + H(+). It carries out the reaction L-threonyl-[protein] + ATP = O-phospho-L-threonyl-[protein] + ADP + H(+). Its activity is regulated as follows. Activated by phosphorylation of Thr-239. Once activated, activity is stimulated by binding target proteins. Functionally, tumor suppressor serine/threonine-protein kinase involved in synaptic plasticity, centriole duplication and G1/S phase transition. Polo-like kinases act by binding and phosphorylating proteins that are already phosphorylated on a specific motif recognized by the POLO box domains. Phosphorylates CPAP, NPM1, RAPGEF2, RASGRF1, SNCA, SIPA1L1 and SYNGAP1. Plays a key role in synaptic plasticity and memory by regulating the Ras and Rap protein signaling: required for overactivity-dependent spine remodeling by phosphorylating the Ras activator RASGRF1 and the Rap inhibitor SIPA1L1 leading to their degradation by the proteasome. Conversely, phosphorylates the Rap activator RAPGEF2 and the Ras inhibitor SYNGAP1, promoting their activity. Also regulates synaptic plasticity independently of kinase activity, via its interaction with NSF that disrupts the interaction between NSF and the GRIA2 subunit of AMPARs, leading to a rapid rundown of AMPAR-mediated current that occludes long term depression. Required for procentriole formation and centriole duplication by phosphorylating CPAP and NPM1, respectively. Its induction by p53/TP53 suggests that it may participate in the mitotic checkpoint following stress. The sequence is that of Serine/threonine-protein kinase PLK2 (PLK2) from Pongo abelii (Sumatran orangutan).